A 344-amino-acid chain; its full sequence is MSSNLSNSQILNNLLEGRNLDELTSRSLMQRWLNDEISDVETGAFLSALRAKSSTGVELSSMAEELLNVCKLPVARPNLYLVDTCGTGGDGANTFNISTAVAFVAASCGVKIAKHGNKSASGKVGSADVLLNLGLDLNCSLEKVITAVSEIGITFLFAPVWHKSLIKLAPLRKTLGIRTVFNQLGPLVNPLRPNAQVLGVASEDLLEPMGRALLKMGMNRAIVVYGSGGLDEASLQGENKLVLVENGELRFSKINISNFNHENIANEKLVVSDQESNEEILKSVLNGSGQISHINVVALNSALVLWAAGIEDDLNEGFNKALFSINQGDPWKKFLLLKNYLQTN.

Residues Gly86, 89-90 (GD), Thr94, 96-99 (NIST), 114-122 (KHGNKSASG), and Ser126 each bind 5-phospho-alpha-D-ribose 1-diphosphate. Gly86 is an anthranilate binding site. Residue Ser98 coordinates Mg(2+). Residue Asn117 coordinates anthranilate. Arg172 contributes to the anthranilate binding site. Residues Asp231 and Glu232 each contribute to the Mg(2+) site.

The protein belongs to the anthranilate phosphoribosyltransferase family. Homodimer. Mg(2+) is required as a cofactor.

It catalyses the reaction N-(5-phospho-beta-D-ribosyl)anthranilate + diphosphate = 5-phospho-alpha-D-ribose 1-diphosphate + anthranilate. It functions in the pathway amino-acid biosynthesis; L-tryptophan biosynthesis; L-tryptophan from chorismate: step 2/5. Its function is as follows. Catalyzes the transfer of the phosphoribosyl group of 5-phosphorylribose-1-pyrophosphate (PRPP) to anthranilate to yield N-(5'-phosphoribosyl)-anthranilate (PRA). The chain is Anthranilate phosphoribosyltransferase from Prochlorococcus marinus (strain AS9601).